Consider the following 462-residue polypeptide: Cysteine--tRNA ligase (462 aa).

Position 30 (C30) interacts with Zn(2+). The 'HIGH' region motif lies at 32–42 (MTVYDYCHIGH). 3 residues coordinate Zn(2+): C214, H239, and E243. The 'KMSKS' region signature appears at 271–275 (KMSKS). K274 is an ATP binding site.

The protein belongs to the class-I aminoacyl-tRNA synthetase family. Monomer. Zn(2+) serves as cofactor.

Its subcellular location is the cytoplasm. The enzyme catalyses tRNA(Cys) + L-cysteine + ATP = L-cysteinyl-tRNA(Cys) + AMP + diphosphate. In Herminiimonas arsenicoxydans, this protein is Cysteine--tRNA ligase.